The primary structure comprises 396 residues: Pre-mRNA-splicing regulator WTAP (396 aa).

An N-acetylmethionine modification is found at M1. At S14 the chain carries Phosphoserine. 3 stretches are compositionally biased toward low complexity: residues 240–257 (QQQQ…TTAS), 278–291 (SNGS…SGSG), and 304–316 (PSSP…SSNS). The disordered stretch occupies residues 240 to 396 (QQQQSQASAP…SSVNVQGSVL (157 aa)). S305, S306, and S341 each carry phosphoserine. The segment covering 340–356 (DSPTGSENSLTHQSNDT) has biased composition (polar residues). T350 is subject to Phosphothreonine. A compositionally biased stretch (basic and acidic residues) spans 357-368 (DSSHDPQEEKAV). Residues 380-396 (HVQNGLDSSVNVQGSVL) show a composition bias toward polar residues. S388 bears the Phosphoserine mark.

It belongs to the fl(2)d family. As to quaternary structure, component of the WMM complex, a N6-methyltransferase complex composed of a catalytic subcomplex, named MAC, and of an associated subcomplex, named MACOM. The MAC subcomplex is composed of METTL3 and METTL14. The MACOM subcomplex is composed of WTAP, ZC3H13, CBLL1/HAKAI, VIRMA, and, in some cases of RBM15 (RBM15 or RBM15B). Interacts with WT1. Also a component of a MACOM-like complex, named WTAP complex, composed of WTAP, ZC3H13, CBLL1, VIRMA, RBM15, BCLAF1 and THRAP3. In terms of tissue distribution, ubiquitously expressed.

It is found in the nucleus speckle. The protein localises to the nucleus. The protein resides in the nucleoplasm. It localises to the cytoplasm. Its function is as follows. Associated component of the WMM complex, a complex that mediates N6-methyladenosine (m6A) methylation of RNAs, a modification that plays a role in the efficiency of mRNA splicing and RNA processing. Required for accumulation of METTL3 and METTL14 to nuclear speckle. Acts as a mRNA splicing regulator. Regulates G2/M cell-cycle transition by binding to the 3' UTR of CCNA2, which enhances its stability. Impairs WT1 DNA-binding ability and inhibits expression of WT1 target genes. This is Pre-mRNA-splicing regulator WTAP from Homo sapiens (Human).